A 411-amino-acid chain; its full sequence is MADAVMSDAHLLGFNTRGTKRESDQQLHLGSSGASGAGVKRQRVEPEQQEPGNPMSMPVSQAYQGFAPLNSQGNQEPTATPDTMVQPFAAIPFPPPPQNGLSTDYGSQHTQDYATQSTEHGIPLYGGGQSLAEHSAPATSTANASSTTDGSQTEGQQSQSQNNENSETKASPKRLHVSNIPFRFRDPDLRQMFGQFGKILDVEIIFNERGSKGFGFVTFETSADADRAREKLHSTVVEGRKIEVNNATARVMTNKKSVTPYGNGWKLSPVVGAVYGPELYAVPGFPYPTAAAAATTAAAFRGAHLRGRGRTVYGAVRAVPPTAIPTYPGVLYQDGFYGTELYGGYAAYRYAQPATAATAATAAAAAAAAYSDGYGRVYTADPYHTLAPATSYGVGAVASLYRGGYSRFAPY.

Residues 16 to 175 (TRGTKRESDQ…SETKASPKRL (160 aa)) are disordered. 2 stretches are compositionally biased toward polar residues: residues 58–83 (PVSQAYQGFAPLNSQGNQEPTATPDT) and 99–119 (NGLSTDYGSQHTQDYATQSTE). A compositionally biased stretch (low complexity) spans 135-165 (SAPATSTANASSTTDGSQTEGQQSQSQNNEN). Positions 173–249 (KRLHVSNIPF…RKIEVNNATA (77 aa)) constitute an RRM domain.

In terms of assembly, interacts with papd4/gld2.

Its subcellular location is the nucleus. It is found in the cytoplasm. Functionally, RNA-binding protein that regulates alternative splicing events by binding to 5'-UGCAUGU-3' elements. Regulates alternative splicing of tissue-specific exons. In Xenopus laevis (African clawed frog), this protein is RNA binding protein fox-1 homolog 2 (rbfox2).